Consider the following 337-residue polypeptide: Tetraacyldisaccharide 4'-kinase (337 aa).

56 to 63 (VAGGAGKT) is a binding site for ATP.

This sequence belongs to the LpxK family.

It carries out the reaction a lipid A disaccharide + ATP = a lipid IVA + ADP + H(+). Its pathway is glycolipid biosynthesis; lipid IV(A) biosynthesis; lipid IV(A) from (3R)-3-hydroxytetradecanoyl-[acyl-carrier-protein] and UDP-N-acetyl-alpha-D-glucosamine: step 6/6. Functionally, transfers the gamma-phosphate of ATP to the 4'-position of a tetraacyldisaccharide 1-phosphate intermediate (termed DS-1-P) to form tetraacyldisaccharide 1,4'-bis-phosphate (lipid IVA). The sequence is that of Tetraacyldisaccharide 4'-kinase from Rhodospirillum centenum (strain ATCC 51521 / SW).